We begin with the raw amino-acid sequence, 681 residues long: Transmembrane protein 214-A (681 aa).

2 disordered regions span residues M1 to P41 and K58 to Q99. N-linked (GlcNAc...) asparagine glycosylation is found at N300 and N324. 2 consecutive transmembrane segments (helical) span residues G471–Y491 and L608–V628.

The protein belongs to the TMEM214 family. In terms of assembly, constitutively interacts with CASP4; required for the localization of procaspase 4 to the ER.

It localises to the endoplasmic reticulum membrane. In terms of biological role, critical mediator, in cooperation with CASP4, of endoplasmic reticulum-stress induced apoptosis. Required or the activation of CASP4 following endoplasmic reticulum stress. This chain is Transmembrane protein 214-A (tmem214-a), found in Xenopus laevis (African clawed frog).